We begin with the raw amino-acid sequence, 72 residues long: MAKEDCIEMEGTVLDTLPNTMFRVELENGHVVTAHISGKMRKNYIRILTGDKVTCEMTPYDLSKGRIIYRAR.

In terms of domain architecture, S1-like spans 1–72; it reads MAKEDCIEME…SKGRIIYRAR (72 aa).

The protein belongs to the IF-1 family. In terms of assembly, component of the 30S ribosomal translation pre-initiation complex which assembles on the 30S ribosome in the order IF-2 and IF-3, IF-1 and N-formylmethionyl-tRNA(fMet); mRNA recruitment can occur at any time during PIC assembly.

It localises to the cytoplasm. One of the essential components for the initiation of protein synthesis. Stabilizes the binding of IF-2 and IF-3 on the 30S subunit to which N-formylmethionyl-tRNA(fMet) subsequently binds. Helps modulate mRNA selection, yielding the 30S pre-initiation complex (PIC). Upon addition of the 50S ribosomal subunit IF-1, IF-2 and IF-3 are released leaving the mature 70S translation initiation complex. This Pseudoalteromonas atlantica (strain T6c / ATCC BAA-1087) protein is Translation initiation factor IF-1.